The chain runs to 307 residues: Aspartate carbamoyltransferase catalytic subunit (307 aa).

Residues R59 and T60 each coordinate carbamoyl phosphate. Residue K87 coordinates L-aspartate. 3 residues coordinate carbamoyl phosphate: R109, H137, and Q140. L-aspartate is bound by residues R170 and R224. Residues G265 and P266 each coordinate carbamoyl phosphate.

This sequence belongs to the aspartate/ornithine carbamoyltransferase superfamily. ATCase family. As to quaternary structure, heterododecamer (2C3:3R2) of six catalytic PyrB chains organized as two trimers (C3), and six regulatory PyrI chains organized as three dimers (R2).

It catalyses the reaction carbamoyl phosphate + L-aspartate = N-carbamoyl-L-aspartate + phosphate + H(+). It functions in the pathway pyrimidine metabolism; UMP biosynthesis via de novo pathway; (S)-dihydroorotate from bicarbonate: step 2/3. In terms of biological role, catalyzes the condensation of carbamoyl phosphate and aspartate to form carbamoyl aspartate and inorganic phosphate, the committed step in the de novo pyrimidine nucleotide biosynthesis pathway. This chain is Aspartate carbamoyltransferase catalytic subunit, found in Cytophaga hutchinsonii (strain ATCC 33406 / DSM 1761 / CIP 103989 / NBRC 15051 / NCIMB 9469 / D465).